The chain runs to 100 residues: Large ribosomal subunit protein bL21 (100 aa).

This sequence belongs to the bacterial ribosomal protein bL21 family. As to quaternary structure, part of the 50S ribosomal subunit. Contacts protein L20.

This protein binds to 23S rRNA in the presence of protein L20. The sequence is that of Large ribosomal subunit protein bL21 from Wolbachia sp. subsp. Drosophila simulans (strain wRi).